Reading from the N-terminus, the 911-residue chain is General transcription factor 3C polypeptide 2 (911 aa).

Disordered stretches follow at residues aspartate 24–alanine 187 and alanine 205–asparagine 297. The segment covering aspartate 35–glutamate 46 has biased composition (polar residues). Phosphoserine is present on serine 63. Positions proline 64–glutamine 81 are enriched in basic and acidic residues. A compositionally biased stretch (basic residues) spans serine 92 to lysine 112. Positions proline 114–proline 123 are enriched in pro residues. 5 positions are modified to phosphoserine: serine 132, serine 165, serine 167, serine 220, and serine 260. The segment covering glutamate 253–glycine 262 has biased composition (acidic residues). The span at proline 263–serine 277 shows a compositional bias: low complexity. 6 WD repeats span residues proline 366–threonine 426, histidine 427–leucine 483, proline 484–valine 535, glutamine 536–leucine 603, tyrosine 604–lysine 654, and arginine 655–aspartate 690. A Phosphoserine modification is found at serine 597. The tract at residues serine 765–arginine 785 is disordered. Residues serine 871, serine 892, and serine 893 each carry the phosphoserine modification. A disordered region spans residues phenylalanine 889 to proline 911. Residue threonine 895 is modified to Phosphothreonine. A Phosphoserine modification is found at serine 901.

As to quaternary structure, part of the TFIIIC subcomplex TFIIIC2, consisting of six subunits, GTF3C1, GTF3C2, GTF3C3, GTF3C4, GTF3C5 and GTF3C6.

The protein localises to the nucleus. In terms of biological role, required for RNA polymerase III-mediated transcription. Component of TFIIIC that initiates transcription complex assembly on tRNA and is required for transcription of 5S rRNA and other stable nuclear and cytoplasmic RNAs. May play a direct role in stabilizing interactions of TFIIIC2 with TFIIIC1. This is General transcription factor 3C polypeptide 2 (GTF3C2) from Homo sapiens (Human).